A 260-amino-acid chain; its full sequence is 3'-5' ssDNA/RNA exonuclease TatD (260 aa).

E92, H128, and H153 together coordinate a divalent metal cation.

It belongs to the metallo-dependent hydrolases superfamily. TatD-type hydrolase family. TatD subfamily. Monomer. Requires Mg(2+) as cofactor.

It localises to the cytoplasm. In terms of biological role, 3'-5' exonuclease that prefers single-stranded DNA and RNA. May play a role in the H(2)O(2)-induced DNA damage repair. The protein is 3'-5' ssDNA/RNA exonuclease TatD of Edwardsiella piscicida.